Here is a 102-residue protein sequence, read N- to C-terminus: Ferredoxin (102 aa).

4Fe-4S ferredoxin-type domains lie at 45–73 (VSVN…ELVE) and 74–102 (TWIE…EVMK). Residues cysteine 54, cysteine 57, cysteine 60, cysteine 64, cysteine 83, cysteine 86, cysteine 89, and cysteine 93 each coordinate [4Fe-4S] cluster.

[4Fe-4S] cluster is required as a cofactor.

The protein operates within membrane lipid metabolism; glycerophospholipid metabolism. In terms of biological role, ferredoxin that is the specific electron donor for the geranylgeranyl reductase GGR involved in the biosynthesis of archaeal membrane lipids. This is Ferredoxin from Methanosarcina acetivorans (strain ATCC 35395 / DSM 2834 / JCM 12185 / C2A).